The sequence spans 1378 residues: DNA-directed RNA polymerase subunit beta (1378 aa).

Belongs to the RNA polymerase beta chain family. The RNAP catalytic core consists of 2 alpha, 1 beta, 1 beta' and 1 omega subunit. When a sigma factor is associated with the core the holoenzyme is formed, which can initiate transcription.

It carries out the reaction RNA(n) + a ribonucleoside 5'-triphosphate = RNA(n+1) + diphosphate. DNA-dependent RNA polymerase catalyzes the transcription of DNA into RNA using the four ribonucleoside triphosphates as substrates. The polypeptide is DNA-directed RNA polymerase subunit beta (Hyphomonas neptunium (strain ATCC 15444)).